Here is a 471-residue protein sequence, read N- to C-terminus: FERM domain-containing protein 8 (471 aa).

Disordered regions lie at residues 1–23 (MEGDDGDFPPEPSEHSLSQRGSV), 381–416 (AATGTDGEVTPSHEPTSPETNNKTRERRQGKLRRQN), and 451–471 (TRQAQPPTYSAVQVTESLEQG). Residues 31–382 (QDLLVYLAND…ELRSVSESAA (352 aa)) enclose the FERM domain.

It is found in the cytoplasm. The protein localises to the cytosol. The protein resides in the cell membrane. Functionally, promotes the cell surface stability of rhomboid 5 homologs and prevents their degradation via the endolysosomal pathway. By acting on rhomboid 5 homologs, involved in ADAM17-mediated ligand shedding. Negatively regulates the Wnt/beta-catenin signaling pathway. The polypeptide is FERM domain-containing protein 8 (frmd8) (Danio rerio (Zebrafish)).